The sequence spans 183 residues: Pyruvoyl-dependent arginine decarboxylase (183 aa).

Pyruvic acid (Ser) is present on Ser44.

This sequence belongs to the PdaD family. Pyruvate is required as a cofactor.

The enzyme catalyses L-arginine + H(+) = agmatine + CO2. This chain is Pyruvoyl-dependent arginine decarboxylase, found in Nitrosopumilus maritimus (strain SCM1).